Here is a 460-residue protein sequence, read N- to C-terminus: Argininosuccinate lyase (460 aa).

The protein belongs to the lyase 1 family. Argininosuccinate lyase subfamily.

It localises to the cytoplasm. The enzyme catalyses 2-(N(omega)-L-arginino)succinate = fumarate + L-arginine. It participates in amino-acid biosynthesis; L-arginine biosynthesis; L-arginine from L-ornithine and carbamoyl phosphate: step 3/3. The chain is Argininosuccinate lyase from Edwardsiella ictaluri (strain 93-146).